The sequence spans 100 residues: Small ribosomal subunit protein uS14c (100 aa).

It belongs to the universal ribosomal protein uS14 family. In terms of assembly, part of the 30S ribosomal subunit.

It localises to the plastid. It is found in the chloroplast. Its function is as follows. Binds 16S rRNA, required for the assembly of 30S particles. The protein is Small ribosomal subunit protein uS14c of Mesostigma viride (Green alga).